Reading from the N-terminus, the 351-residue chain is 1-aminocyclopropane-1-carboxylate oxidase homolog 4 (351 aa).

Residues Lys-200 to Ala-304 enclose the Fe2OG dioxygenase domain. Residues His-224, Asp-226, and His-280 each coordinate Fe cation. Position 291 (Arg-291) interacts with 2-oxoglutarate.

The protein belongs to the iron/ascorbate-dependent oxidoreductase family. The cofactor is Fe(2+).

In Arabidopsis thaliana (Mouse-ear cress), this protein is 1-aminocyclopropane-1-carboxylate oxidase homolog 4.